The sequence spans 206 residues: N-(5'-phosphoribosyl)anthranilate isomerase (206 aa).

It belongs to the TrpF family.

The catalysed reaction is N-(5-phospho-beta-D-ribosyl)anthranilate = 1-(2-carboxyphenylamino)-1-deoxy-D-ribulose 5-phosphate. Its pathway is amino-acid biosynthesis; L-tryptophan biosynthesis; L-tryptophan from chorismate: step 3/5. The sequence is that of N-(5'-phosphoribosyl)anthranilate isomerase from Rubrobacter xylanophilus (strain DSM 9941 / JCM 11954 / NBRC 16129 / PRD-1).